The primary structure comprises 276 residues: Shikimate dehydrogenase (NADP(+)) (276 aa).

Residues 15–17 and threonine 62 contribute to the shikimate site; that span reads SLS. Lysine 66 functions as the Proton acceptor in the catalytic mechanism. Glutamate 78 is a binding site for NADP(+). The shikimate site is built by asparagine 87 and aspartate 102. Residues 151–156 and isoleucine 218 contribute to the NADP(+) site; that span reads NRTVEK. Tyrosine 220 is a binding site for shikimate. Residue glycine 241 coordinates NADP(+).

The protein belongs to the shikimate dehydrogenase family. As to quaternary structure, homodimer.

It catalyses the reaction shikimate + NADP(+) = 3-dehydroshikimate + NADPH + H(+). It functions in the pathway metabolic intermediate biosynthesis; chorismate biosynthesis; chorismate from D-erythrose 4-phosphate and phosphoenolpyruvate: step 4/7. Involved in the biosynthesis of the chorismate, which leads to the biosynthesis of aromatic amino acids. Catalyzes the reversible NADPH linked reduction of 3-dehydroshikimate (DHSA) to yield shikimate (SA). This chain is Shikimate dehydrogenase (NADP(+)), found in Geobacillus kaustophilus (strain HTA426).